Here is an 88-residue protein sequence, read N- to C-terminus: Putative defensin-like protein 228 (88 aa).

The first 27 residues, 1–27 (MMKSAILLMVSCVFMFLVVSYIQDVEG), serve as a signal peptide directing secretion. 4 disulfide bridges follow: Cys32-Cys88, Cys42-Cys66, Cys50-Cys82, and Cys64-Cys84.

This sequence belongs to the DEFL family.

The protein localises to the secreted. The chain is Putative defensin-like protein 228 (SCRL3) from Arabidopsis thaliana (Mouse-ear cress).